The chain runs to 669 residues: Pre-mRNA-processing factor 39 (669 aa).

The span at 1–10 (MQNSHMDEYR) shows a compositional bias: basic and acidic residues. The interval 1-23 (MQNSHMDEYRNSSNGSTGNSSEV) is disordered. The span at 11–23 (NSSNGSTGNSSEV) shows a compositional bias: low complexity. The residue at position 44 (Ser44) is a Phosphoserine. HAT repeat units lie at residues 109-141 (NHLM…LEKR), 143-175 (DNIK…FLKE), 183-218 (ETNN…WENE), 220-253 (GNLR…HVQN), 333-365 (TFEE…FEIE), 367-399 (GTHE…YMEN), and 404-436 (GVRH…QQGN). Over residues 599 to 624 (KEQDSLKRKAENGSEEPEEKKAHTED) the composition is skewed to basic and acidic residues. The disordered stretch occupies residues 599–634 (KEQDSLKRKAENGSEEPEEKKAHTEDTTSSSTQMID). Positions 625 to 634 (TTSSSTQMID) are enriched in polar residues.

This sequence belongs to the PRP39 family.

The protein resides in the nucleus. Involved in pre-mRNA splicing. In Homo sapiens (Human), this protein is Pre-mRNA-processing factor 39 (PRPF39).